A 285-amino-acid polypeptide reads, in one-letter code: tRNA U34 carboxymethyltransferase (285 aa).

Carboxy-S-adenosyl-L-methionine-binding positions include K56, W70, K75, G94, 143-144 (VE), Y163, and R278.

The protein belongs to the class I-like SAM-binding methyltransferase superfamily. CmoB family. In terms of assembly, homotetramer.

It carries out the reaction carboxy-S-adenosyl-L-methionine + 5-hydroxyuridine(34) in tRNA = 5-carboxymethoxyuridine(34) in tRNA + S-adenosyl-L-homocysteine + H(+). In terms of biological role, catalyzes carboxymethyl transfer from carboxy-S-adenosyl-L-methionine (Cx-SAM) to 5-hydroxyuridine (ho5U) to form 5-carboxymethoxyuridine (cmo5U) at position 34 in tRNAs. This chain is tRNA U34 carboxymethyltransferase, found in Campylobacter hominis (strain ATCC BAA-381 / DSM 21671 / CCUG 45161 / LMG 19568 / NCTC 13146 / CH001A).